The chain runs to 894 residues: Mitogen-activated protein kinase kinase kinase kinase 3 (894 aa).

Residue methionine 1 is modified to N-acetylmethionine. Residues 16–273 (FELIQRIGSG…AEKLLQHPFV (258 aa)) form the Protein kinase domain. Residues 22 to 30 (IGSGTYGDV) and lysine 45 contribute to the ATP site. Aspartate 136 functions as the Proton acceptor in the catalytic mechanism. Phosphoserine is present on serine 329. Positions 339–358 (DPPLRKETEPHHELPDSDGF) are disordered. Residues 340-353 (PPLRKETEPHHELP) show a composition bias toward basic and acidic residues. Serine 398 bears the Phosphoserine mark. The segment at 408–537 (HVAHLEDDEG…VPKPISNGLP (130 aa)) is disordered. Over residues 473–487 (HVPPRPPPPRLPPQK) the composition is skewed to pro residues. The segment covering 508–520 (LYQQQSEQRGTNL) has biased composition (polar residues). One can recognise a CNH domain in the interval 556–867 (PLKIHCATSW…IFRLLGSDRV (312 aa)).

The protein belongs to the protein kinase superfamily. STE Ser/Thr protein kinase family. STE20 subfamily. In terms of assembly, interacts with SH3GL2. Interaction appears to regulate MAP4K3-mediated JNK activation. The cofactor is Mg(2+).

It carries out the reaction L-seryl-[protein] + ATP = O-phospho-L-seryl-[protein] + ADP + H(+). The catalysed reaction is L-threonyl-[protein] + ATP = O-phospho-L-threonyl-[protein] + ADP + H(+). Its function is as follows. Serine/threonine kinase that plays a role in the response to environmental stress. Appears to act upstream of the JUN N-terminal pathway. Activator of the Hippo signaling pathway which plays a pivotal role in organ size control and tumor suppression by restricting proliferation and promoting apoptosis. MAP4Ks act in parallel to and are partially redundant with STK3/MST2 and STK4/MST2 in the phosphorylation and activation of LATS1/2, and establish MAP4Ks as components of the expanded Hippo pathway. In Mus musculus (Mouse), this protein is Mitogen-activated protein kinase kinase kinase kinase 3 (Map4k3).